We begin with the raw amino-acid sequence, 362 residues long: tRNA-specific 2-thiouridylase MnmA (362 aa).

ATP is bound by residues 9–16 and Met-35; that span reads GMSGGVDS. Positions 95–97 are interaction with target base in tRNA; the sequence is NPD. The active-site Nucleophile is the Cys-100. Cys-100 and Cys-196 form a disulfide bridge. Gly-124 contributes to the ATP binding site. The interaction with tRNA stretch occupies residues 146-148; that stretch reads KDQ. The active-site Cysteine persulfide intermediate is Cys-196. The interaction with tRNA stretch occupies residues 308–309; the sequence is RY.

It belongs to the MnmA/TRMU family.

The protein localises to the cytoplasm. The enzyme catalyses S-sulfanyl-L-cysteinyl-[protein] + uridine(34) in tRNA + AH2 + ATP = 2-thiouridine(34) in tRNA + L-cysteinyl-[protein] + A + AMP + diphosphate + H(+). Its function is as follows. Catalyzes the 2-thiolation of uridine at the wobble position (U34) of tRNA, leading to the formation of s(2)U34. This chain is tRNA-specific 2-thiouridylase MnmA, found in Nitrosomonas europaea (strain ATCC 19718 / CIP 103999 / KCTC 2705 / NBRC 14298).